A 484-amino-acid polypeptide reads, in one-letter code: Pyruvate kinase (484 aa).

Residue R33 coordinates substrate. The K(+) site is built by N35, S37, D67, and T68. 35–38 (NFSH) is a binding site for ATP. 2 residues coordinate ATP: R74 and K155. E221 provides a ligand contact to Mg(2+). Residues G244, D245, and T277 each coordinate substrate. D245 is a Mg(2+) binding site.

Belongs to the pyruvate kinase family. In terms of assembly, homotetramer. Requires Mg(2+) as cofactor. K(+) serves as cofactor.

It carries out the reaction pyruvate + ATP = phosphoenolpyruvate + ADP + H(+). It participates in carbohydrate degradation; glycolysis; pyruvate from D-glyceraldehyde 3-phosphate: step 5/5. In Chlamydia pneumoniae (Chlamydophila pneumoniae), this protein is Pyruvate kinase (pyk).